Reading from the N-terminus, the 518-residue chain is Membrane-bound glycerophospholipid O-acyltransferase 2 (518 aa).

Helical transmembrane passes span proline 21–phenylalanine 41, threonine 60–isoleucine 80, tyrosine 87–glycine 107, phenylalanine 183–glycine 203, isoleucine 230–threonine 250, and alanine 267–alanine 283. Active-site residues include asparagine 341 and histidine 372. Helical transmembrane passes span phenylalanine 365–glycine 385, isoleucine 415–leucine 435, and phenylalanine 443–proline 463.

Belongs to the membrane-bound acyltransferase family.

It localises to the endoplasmic reticulum membrane. The enzyme catalyses a 1-acyl-sn-glycero-3-phosphocholine + an acyl-CoA = a 1,2-diacyl-sn-glycero-3-phosphocholine + CoA. It carries out the reaction a 1-acyl-sn-glycero-3-phosphoethanolamine + an acyl-CoA = a 1,2-diacyl-sn-glycero-3-phosphoethanolamine + CoA. The catalysed reaction is a 1-acyl-sn-glycero-3-phosphate + an acyl-CoA = a 1,2-diacyl-sn-glycero-3-phosphate + CoA. It catalyses the reaction (9Z)-hexadecenoyl-CoA + 1-hexadecanoyl-sn-glycero-3-phosphocholine = 1-hexadecanoyl-2-(9Z-hexadecenoyl)-sn-glycero-3-phosphocholine + CoA. The enzyme catalyses 1-hexadecanoyl-sn-glycero-3-phosphoethanolamine + (9Z)-octadecenoyl-CoA = 1-hexadecanoyl-2-(9Z-octadecenoyl)-sn-glycero-3-phosphoethanolamine + CoA. It carries out the reaction 1-hexadecanoyl-sn-glycero-3-phosphoethanolamine + (9Z)-hexadecenoyl-CoA = 1-hexadecanoyl-2-(9Z)-hexadecenoyl-sn-glycero-3-phosphoethanolamine + CoA. The catalysed reaction is 1-(9Z-octadecenoyl)-sn-glycero-3-phospho-L-serine + hexadecanoyl-CoA = 1-(9Z)-octadecenoyl-2-hexadecanoyl-sn-glycero-3-phosphoserine + CoA. It catalyses the reaction (9Z,12Z)-octadecadienoyl-CoA + 1-hexadecanoyl-sn-glycero-3-phosphocholine = 1-hexadecanoyl-2-(9Z,12Z-octadecadienoyl)-sn-glycero-3-phosphocholine + CoA. The enzyme catalyses 1-hexadecanoyl-sn-glycero-3-phosphocholine + (9Z)-octadecenoyl-CoA = 1-hexadecanoyl-2-(9Z-octadecenoyl)-sn-glycero-3-phosphocholine + CoA. It carries out the reaction 1-hexadecanoyl-sn-glycero-3-phosphate + (9Z)-hexadecenoyl-CoA = 1-hexadecanoyl-2-[(9Z)-hexadec-9-enoyl]-sn-glycero-3-phosphate + CoA. The catalysed reaction is 1-hexadecanoyl-sn-glycero-3-phosphate + (9Z)-octadecenoyl-CoA = 1-hexadecanoyl-2-(9Z-octadecenoyl)-sn-glycero-3-phosphate + CoA. It catalyses the reaction a 1-O-(1Z-alkenyl)-sn-glycero-3-phosphocholine + (9Z)-octadecenoyl-CoA = 1-O-(1Z)-alkenyl-2-(9Z)-octadecenoyl-sn-glycero-3-phosphocholine + CoA. The enzyme catalyses a 1-O-(1Z-alkenyl)-sn-glycero-3-phosphoethanolamine + (9Z)-octadecenoyl-CoA = 1-O-(1Z)-alkenyl-2-(9Z)-octadecenoyl-sn-glycero-3-phosphoethanolamine + CoA. It carries out the reaction 1-octadecanoyl-sn-glycero-3-phosphoethanolamine + (9Z)-octadecenoyl-CoA = 1-octadecanoyl-2-(9Z-octadecenoyl)-sn-glycero-3-phosphoethanolamine + CoA. The catalysed reaction is 1-octadecanoyl-sn-glycero-3-phosphocholine + (9Z)-octadecenoyl-CoA = 1-octadecanoyl-2-(9Z-octadecenoyl)-sn-glycero-3-phosphocholine + CoA. It catalyses the reaction 1-(9Z-octadecenoyl)-sn-glycero-3-phosphoethanolamine + (9Z)-octadecenoyl-CoA = 1,2-di-(9Z-octadecenoyl)-sn-glycero-3-phosphoethanolamine + CoA. It participates in lipid metabolism; phospholipid metabolism. Its function is as follows. Acyltransferase which catalyzes the transfer of an acyl group from an acyl-CoA to a lysophospholipid leading to the production of a phospholipid and participates in the reacylation step of the phospholipid remodeling pathway also known as the Lands cycle. May catalyze preferentially the acylation of lysophosphatidylethanolamine (1-acyl-sn-glycero-3-phosphoethanolamine or LPE) and lysophosphatidic acid (LPA) and to a lesser extend lysophosphatidylcholine (LPC) and lysophosphatidylserine (LPS). Prefers oleoyl-CoA as the acyl donor. This Gallus gallus (Chicken) protein is Membrane-bound glycerophospholipid O-acyltransferase 2.